Here is a 203-residue protein sequence, read N- to C-terminus: MRLMARTATNRTATVRRTTKETDITVTLDLDSPVSTPPTTGHGFLDHMLDALARHGRLGLSVRATGDLHIEPHHLIEDVGITLGQALNQALGGRRGIERYGSAFVPMDETLAHVVLDLSGRAHLAFEPERLDVWGDAGGMTHYHLREFLRGFCNHAGVTLHVRLLAGREAHHVIEAMVKAFARALRDAVRVTSEELASTKGLL.

It belongs to the imidazoleglycerol-phosphate dehydratase family.

It localises to the cytoplasm. It carries out the reaction D-erythro-1-(imidazol-4-yl)glycerol 3-phosphate = 3-(imidazol-4-yl)-2-oxopropyl phosphate + H2O. It functions in the pathway amino-acid biosynthesis; L-histidine biosynthesis; L-histidine from 5-phospho-alpha-D-ribose 1-diphosphate: step 6/9. The polypeptide is Imidazoleglycerol-phosphate dehydratase (Deinococcus geothermalis (strain DSM 11300 / CIP 105573 / AG-3a)).